Reading from the N-terminus, the 324-residue chain is Nidogen-1 (324 aa).

Residues Pro16–Pro178 form the NIDO domain. N-linked (GlcNAc...) asparagine glycosylation is present at Asn97. A sulfotyrosine mark is found at Tyr200 and Tyr205. The interval Thr219–Thr259 is disordered. Positions Ala247–Thr259 are enriched in basic and acidic residues. Residues Ser295–Val324 form the EGF-like domain. 2 disulfides stabilise this stretch: Cys299-Cys312 and Cys306-Cys321.

Interacts with FBLN1. Interacts with LGALS3BP. Interacts with PLXDC1. Interacts with SVEP1. N- and O-glycosylated.

The protein localises to the secreted. The protein resides in the extracellular space. Its subcellular location is the extracellular matrix. It is found in the basement membrane. Functionally, sulfated glycoprotein widely distributed in basement membranes and tightly associated with laminin. Also binds to collagen IV and perlecan. It probably has a role in cell-extracellular matrix interactions. This Rattus norvegicus (Rat) protein is Nidogen-1 (Nid1).